Consider the following 589-residue polypeptide: Acyl-CoA ligase SID4 (589 aa).

The PTS2-type peroxisomal targeting signal signature appears at 12–20 (RLQQTLNHI). ATP is bound by residues 228 to 236 (TSGSTGNPK), 367 to 372 (SSYGLT), Asp-458, and Arg-473. Substrate is bound at residue Thr-372. Residues 481 to 483 (GGE), Lys-547, and 555 to 557 (FGL) contribute to the CoA site. Lys-572 provides a ligand contact to ATP.

The protein belongs to the ATP-dependent AMP-binding enzyme family.

Its subcellular location is the peroxisome. The protein operates within siderophore biosynthesis. Functionally, acyl-CoA ligase; part of the gene cluster that mediates the biosynthesis of hydroxamate-containing siderophores that play a critical role in virulence via intracellular iron acquisition during macrophage infection. This is Acyl-CoA ligase SID4 from Ajellomyces capsulatus (Darling's disease fungus).